A 122-amino-acid polypeptide reads, in one-letter code: Large ribosomal subunit protein uL14 (122 aa).

This sequence belongs to the universal ribosomal protein uL14 family. Part of the 50S ribosomal subunit. Forms a cluster with proteins L3 and L19. In the 70S ribosome, L14 and L19 interact and together make contacts with the 16S rRNA in bridges B5 and B8.

Binds to 23S rRNA. Forms part of two intersubunit bridges in the 70S ribosome. The sequence is that of Large ribosomal subunit protein uL14 from Ruminiclostridium cellulolyticum (strain ATCC 35319 / DSM 5812 / JCM 6584 / H10) (Clostridium cellulolyticum).